The primary structure comprises 461 residues: Argininosuccinate lyase (461 aa).

The protein belongs to the lyase 1 family. Argininosuccinate lyase subfamily.

The protein resides in the cytoplasm. The catalysed reaction is 2-(N(omega)-L-arginino)succinate = fumarate + L-arginine. Its pathway is amino-acid biosynthesis; L-arginine biosynthesis; L-arginine from L-ornithine and carbamoyl phosphate: step 3/3. The sequence is that of Argininosuccinate lyase from Aeromonas hydrophila subsp. hydrophila (strain ATCC 7966 / DSM 30187 / BCRC 13018 / CCUG 14551 / JCM 1027 / KCTC 2358 / NCIMB 9240 / NCTC 8049).